Reading from the N-terminus, the 221-residue chain is 2-C-methyl-D-erythritol 4-phosphate cytidylyltransferase (221 aa).

The protein belongs to the IspD/TarI cytidylyltransferase family. IspD subfamily.

It carries out the reaction 2-C-methyl-D-erythritol 4-phosphate + CTP + H(+) = 4-CDP-2-C-methyl-D-erythritol + diphosphate. Its pathway is isoprenoid biosynthesis; isopentenyl diphosphate biosynthesis via DXP pathway; isopentenyl diphosphate from 1-deoxy-D-xylulose 5-phosphate: step 2/6. In terms of biological role, catalyzes the formation of 4-diphosphocytidyl-2-C-methyl-D-erythritol from CTP and 2-C-methyl-D-erythritol 4-phosphate (MEP). This is 2-C-methyl-D-erythritol 4-phosphate cytidylyltransferase from Roseobacter denitrificans (strain ATCC 33942 / OCh 114) (Erythrobacter sp. (strain OCh 114)).